The chain runs to 176 residues: 3-hydroxydecanoyl-[acyl-carrier-protein] dehydratase (176 aa).

The active site involves H71.

The protein belongs to the thioester dehydratase family. FabA subfamily. Homodimer.

It is found in the cytoplasm. The enzyme catalyses a (3R)-hydroxyacyl-[ACP] = a (2E)-enoyl-[ACP] + H2O. It catalyses the reaction (3R)-hydroxydecanoyl-[ACP] = (2E)-decenoyl-[ACP] + H2O. The catalysed reaction is (2E)-decenoyl-[ACP] = (3Z)-decenoyl-[ACP]. It participates in lipid metabolism; fatty acid biosynthesis. Functionally, necessary for the introduction of cis unsaturation into fatty acids. Catalyzes the dehydration of (3R)-3-hydroxydecanoyl-ACP to E-(2)-decenoyl-ACP and then its isomerization to Z-(3)-decenoyl-ACP. Can catalyze the dehydratase reaction for beta-hydroxyacyl-ACPs with saturated chain lengths up to 16:0, being most active on intermediate chain length. This Rhodopseudomonas palustris (strain HaA2) protein is 3-hydroxydecanoyl-[acyl-carrier-protein] dehydratase.